A 354-amino-acid chain; its full sequence is MPSLQVIRAAVAELPQGSSIVAAVAGGTTGIGSYLAKALATTFASHGSKLRVYIVGRNAGRAKTVISECQKISPGSDWRFIHATDLALISEVDKSSAEIIKQETEAPFHGELARLDLLYMTHAIPILGHKRTTEEGLDALESTIYYSRIRFILQLLPLLTASPRVAHVISVYAGGMENGVKPDEEPIGFVPAEIYHFNTVRKYTTFMKTFVFEELAEKYAERLSLIHIYPGLVDGPGFTQMPRWFRVLFTLMKPLTSLYMTRSEDCGMVMAYLATSRFSAKGSGQDAPTSTDTLAPKSSLGVVGGGAYSLGQRADSQTPQIMFEKSRKPDTSKKAWDHTIRTLDDIAKKNATIA.

Residues Ile-31, Asp-85, Arg-201, and Val-233 each coordinate NADP(+).

It belongs to the short-chain dehydrogenases/reductases (SDR) family.

It participates in mycotoxin biosynthesis. Its function is as follows. Short-chain dehydrogenase/reductase; part of the satratoxin SC1 cluster involved in the biosynthesis of satratoxins, trichothecene mycotoxins that are associated with human food poisonings. Satratoxins are suggested to be made by products of multiple gene clusters (SC1, SC2 and SC3) that encode 21 proteins in all, including polyketide synthases, acetyltransferases, and other enzymes expected to modify the trichothecene skeleton. SC1 encodes 10 proteins, SAT1 to SAT10. The largest are SAT8, which encodes a putative polyketide synthase (PKS) with a conventional non-reducing architecture, and SAT10, a putative protein containing four ankyrin repeats and thus may be involved in protein scaffolding. The putative short-chain reductase SAT3 may assist the PKS in some capacity. SAT6 contains a secretory lipase domain and acts probably as a trichothecene esterase. SAT5 encodes a putative acetyltransferase, and so, with SAT6, may affect endogenous protection from toxicity. The probable transcription factor SAT9 may regulate the expression of the SC1 cluster. SC2 encodes proteins SAT11 to SAT16, the largest of which encodes the putative reducing PKS SAT13. SAT11 is a cytochrome P450 monooxygenase, while SAT14 and SAT16 are probable acetyltransferases. The SC2 cluster may be regulated by the transcription factor SAT15. SC3 is a small cluster that encodes 5 proteins, SAT17 to SAT21. SAT21 is a putative MFS-type transporter which may have a role in exporting secondary metabolites. The four other proteins putatively encoded in SC3 include the taurine hydroxylase-like protein SAT17, the O-methyltransferase SAT18, the acetyltransferase SAT19, and the Cys6-type zinc finger SAT20, the latter being probably involved in regulation of SC3 expression. The polypeptide is Short-chain dehydrogenase/reductase SAT2 (Stachybotrys chartarum (strain CBS 109288 / IBT 7711) (Toxic black mold)).